Here is a 323-residue protein sequence, read N- to C-terminus: Lipoyl synthase (323 aa).

[4Fe-4S] cluster-binding residues include Cys56, Cys61, Cys67, Cys82, Cys86, Cys89, and Ser293. A Radical SAM core domain is found at 68–282; sequence WEDREATFLI…AAEARELGFA (215 aa).

The protein belongs to the radical SAM superfamily. Lipoyl synthase family. It depends on [4Fe-4S] cluster as a cofactor.

It is found in the cytoplasm. The catalysed reaction is [[Fe-S] cluster scaffold protein carrying a second [4Fe-4S](2+) cluster] + N(6)-octanoyl-L-lysyl-[protein] + 2 oxidized [2Fe-2S]-[ferredoxin] + 2 S-adenosyl-L-methionine + 4 H(+) = [[Fe-S] cluster scaffold protein] + N(6)-[(R)-dihydrolipoyl]-L-lysyl-[protein] + 4 Fe(3+) + 2 hydrogen sulfide + 2 5'-deoxyadenosine + 2 L-methionine + 2 reduced [2Fe-2S]-[ferredoxin]. It participates in protein modification; protein lipoylation via endogenous pathway; protein N(6)-(lipoyl)lysine from octanoyl-[acyl-carrier-protein]: step 2/2. Catalyzes the radical-mediated insertion of two sulfur atoms into the C-6 and C-8 positions of the octanoyl moiety bound to the lipoyl domains of lipoate-dependent enzymes, thereby converting the octanoylated domains into lipoylated derivatives. This is Lipoyl synthase from Acidothermus cellulolyticus (strain ATCC 43068 / DSM 8971 / 11B).